The sequence spans 386 residues: Chorismate synthase (386 aa).

The disordered stretch occupies residues 32 to 60 (LPLSEDDVQRELDRRRPGQSGVSTPRSER). The span at 38–47 (DVQRELDRRR) shows a compositional bias: basic and acidic residues. NADP(+) is bound at residue R46. FMN-binding positions include 123–125 (RAS), G290, 305–309 (KPTPS), and R332.

Belongs to the chorismate synthase family. The cofactor is FMNH2.

It catalyses the reaction 5-O-(1-carboxyvinyl)-3-phosphoshikimate = chorismate + phosphate. Its pathway is metabolic intermediate biosynthesis; chorismate biosynthesis; chorismate from D-erythrose 4-phosphate and phosphoenolpyruvate: step 7/7. Its function is as follows. Catalyzes the anti-1,4-elimination of the C-3 phosphate and the C-6 proR hydrogen from 5-enolpyruvylshikimate-3-phosphate (EPSP) to yield chorismate, which is the branch point compound that serves as the starting substrate for the three terminal pathways of aromatic amino acid biosynthesis. This reaction introduces a second double bond into the aromatic ring system. This Methanopyrus kandleri (strain AV19 / DSM 6324 / JCM 9639 / NBRC 100938) protein is Chorismate synthase.